The sequence spans 541 residues: Glucans biosynthesis protein D (541 aa).

The tat-type signal signal peptide spans Met-1–Ala-29.

It belongs to the OpgD/OpgG family. Predicted to be exported by the Tat system. The position of the signal peptide cleavage has not been experimentally proven.

The protein localises to the periplasm. It functions in the pathway glycan metabolism; osmoregulated periplasmic glucan (OPG) biosynthesis. In terms of biological role, probably involved in the control of the structural glucose backbone of osmoregulated periplasmic glucans (OPGs). This is Glucans biosynthesis protein D from Pseudomonas fluorescens (strain SBW25).